Consider the following 352-residue polypeptide: Mitochondrial hydrolase YKR070W (352 aa).

This sequence belongs to the HAD-like hydrolase superfamily.

The protein localises to the mitochondrion. The protein is Mitochondrial hydrolase YKR070W of Saccharomyces cerevisiae (strain ATCC 204508 / S288c) (Baker's yeast).